Here is a 103-residue protein sequence, read N- to C-terminus: U6 snRNA-associated Sm-like protein LSm7 (103 aa).

At A2 the chain carries N-acetylalanine. Positions 10–90 constitute a Sm domain; that stretch reads ESILDLSKYI…VVLICPQDGM (81 aa).

This sequence belongs to the snRNP Sm proteins family. As to quaternary structure, component of the precatalytic spliceosome (spliceosome B complex). Component of the U4/U6-U5 tri-snRNP complex, a building block of the precatalytic spliceosome (spliceosome B complex). The U4/U6-U5 tri-snRNP complex is composed of the U4, U6 and U5 snRNAs and at least PRPF3, PRPF4, PRPF6, PRPF8, PRPF31, SNRNP200, TXNL4A, SNRNP40, SNRPB, SNRPD1, SNRPD2, SNRPD3, SNRPE, SNRPF, SNRPG, DDX23, CD2BP2, PPIH, SNU13, EFTUD2, SART1 and USP39, plus LSM2, LSM3, LSM4, LSM5, LSM6, LSM7 and LSM8. LSM2, LSM3, LSM4, LSM5, LSM6, LSM7 and LSM8 form a heptameric, ring-shaped subcomplex (the LSM2-8 complex) that is part of the U4/U6-U5 tri-snRNP complex and the precatalytic spliceosome. Interacts with TACC1.

The protein resides in the nucleus. Plays a role in pre-mRNA splicing as component of the U4/U6-U5 tri-snRNP complex that is involved in spliceosome assembly, and as component of the precatalytic spliceosome (spliceosome B complex). The heptameric LSM2-8 complex binds specifically to the 3'-terminal U-tract of U6 snRNA. The protein is U6 snRNA-associated Sm-like protein LSm7 (LSM7) of Homo sapiens (Human).